The chain runs to 397 residues: MVEPQEGKTRFHDFNLAPSLMHAIHDLGFPYCTPIQAQVLGFTLRGQDAIGRAQTGTGKTAAFLISIITQLLQTPPPKERYMGEPRALIIAPTRELVVQIAKDAAALTKYTGLNVMTFVGGMDFDKQLKQLEARFCDILVATPGRLLDFNQRGEVHLDMVEVMVLDEADRMLDMGFIPQVRQIIRQTPHKGERQTLLFSATFTDDVMNLAKQWTVDPAIVEIEPENVASDTVEQHVYAVAGSDKYKLLYNLVAQNNWERVMVFANRKDEVRRIEERLTKDGISAAQMSGDVPQHKRIRTLEGFREGKIRVLVATDVAGRGIHIDGISHVINFTLPEDPDDYVHRIGRTGRAGASGTSISFAGEDDAFALPPIEELLGRKITCEMPPAELLKPVPRKH.

A Q motif motif is present at residues 9–37 (TRFHDFNLAPSLMHAIHDLGFPYCTPIQA). In terms of domain architecture, Helicase ATP-binding spans 40 to 220 (LGFTLRGQDA…KQWTVDPAIV (181 aa)). Residue 53–60 (AQTGTGKT) coordinates ATP. The DEAD box motif lies at 166–169 (DEAD). Residues 243–393 (DKYKLLYNLV…MPPAELLKPV (151 aa)) enclose the Helicase C-terminal domain.

The protein belongs to the DEAD box helicase family. RhlB subfamily. In terms of assembly, component of the RNA degradosome, which is a multiprotein complex involved in RNA processing and mRNA degradation.

The protein localises to the cytoplasm. It catalyses the reaction ATP + H2O = ADP + phosphate + H(+). In terms of biological role, DEAD-box RNA helicase involved in RNA degradation. Has RNA-dependent ATPase activity and unwinds double-stranded RNA. This chain is ATP-dependent RNA helicase RhlB, found in Pseudomonas aeruginosa (strain UCBPP-PA14).